The primary structure comprises 192 residues: Xanthine phosphoribosyltransferase (192 aa).

Xanthine is bound by residues L20 and T26. Residue 127–131 coordinates 5-phospho-alpha-D-ribose 1-diphosphate; it reads ANGQA. K155 serves as a coordination point for xanthine.

This sequence belongs to the purine/pyrimidine phosphoribosyltransferase family. Xpt subfamily. As to quaternary structure, homodimer.

The protein resides in the cytoplasm. The catalysed reaction is XMP + diphosphate = xanthine + 5-phospho-alpha-D-ribose 1-diphosphate. Its pathway is purine metabolism; XMP biosynthesis via salvage pathway; XMP from xanthine: step 1/1. Converts the preformed base xanthine, a product of nucleic acid breakdown, to xanthosine 5'-monophosphate (XMP), so it can be reused for RNA or DNA synthesis. This is Xanthine phosphoribosyltransferase from Streptococcus thermophilus.